The primary structure comprises 242 residues: MVIIPAIDLKGGKCVRLLQGDFERVTVYSDHPVEMAKAWREKGAERLHLVDLDGSIAGNPRNAAIISQIVKSVGVPVEIGGGIRDISTIQRYLDMGVQWVILGTAALKDRSFVYNACDLFPGHVILGIDANNGKVAVEGWTEQSAITALELAISYENRGIAAVIYTDISRDGMQTGVNVEGTRVLAEAVDIPVIASGGVATLDDIKRLLPLEESGIAGVIIGKALYSGAIALEEAISLAKSS.

The active-site Proton acceptor is D8. D129 functions as the Proton donor in the catalytic mechanism.

Belongs to the HisA/HisF family.

The protein localises to the cytoplasm. It catalyses the reaction 1-(5-phospho-beta-D-ribosyl)-5-[(5-phospho-beta-D-ribosylamino)methylideneamino]imidazole-4-carboxamide = 5-[(5-phospho-1-deoxy-D-ribulos-1-ylimino)methylamino]-1-(5-phospho-beta-D-ribosyl)imidazole-4-carboxamide. It participates in amino-acid biosynthesis; L-histidine biosynthesis; L-histidine from 5-phospho-alpha-D-ribose 1-diphosphate: step 4/9. In Syntrophus aciditrophicus (strain SB), this protein is 1-(5-phosphoribosyl)-5-[(5-phosphoribosylamino)methylideneamino] imidazole-4-carboxamide isomerase.